Reading from the N-terminus, the 41-residue chain is Large ribosomal subunit protein bL36B (41 aa).

The protein belongs to the bacterial ribosomal protein bL36 family.

The sequence is that of Large ribosomal subunit protein bL36B from Haemophilus ducreyi (strain 35000HP / ATCC 700724).